A 207-amino-acid chain; its full sequence is Prolactin (207 aa).

The signal sequence occupies residues K1–G20. Cystine bridges form between C66–C180 and C197–C207.

Belongs to the somatotropin/prolactin family. As to expression, pituitary gland.

It is found in the secreted. The chain is Prolactin (prl) from Hypophthalmichthys molitrix (Silver carp).